The primary structure comprises 288 residues: Acetyl-coenzyme A carboxylase carboxyl transferase subunit beta (288 aa).

One can recognise a CoA carboxyltransferase N-terminal domain in the interval 30 to 288 (IMTKCPKCKK…KLHQEVKKDA (259 aa)). Zn(2+) contacts are provided by C34, C37, C53, and C56. The segment at 34 to 56 (CPKCKKIMYTKELNENLNVCFNC) adopts a C4-type zinc-finger fold.

It belongs to the AccD/PCCB family. Acetyl-CoA carboxylase is a heterohexamer composed of biotin carboxyl carrier protein (AccB), biotin carboxylase (AccC) and two subunits each of ACCase subunit alpha (AccA) and ACCase subunit beta (AccD). Zn(2+) serves as cofactor.

It localises to the cytoplasm. The catalysed reaction is N(6)-carboxybiotinyl-L-lysyl-[protein] + acetyl-CoA = N(6)-biotinyl-L-lysyl-[protein] + malonyl-CoA. It functions in the pathway lipid metabolism; malonyl-CoA biosynthesis; malonyl-CoA from acetyl-CoA: step 1/1. In terms of biological role, component of the acetyl coenzyme A carboxylase (ACC) complex. Biotin carboxylase (BC) catalyzes the carboxylation of biotin on its carrier protein (BCCP) and then the CO(2) group is transferred by the transcarboxylase to acetyl-CoA to form malonyl-CoA. This Staphylococcus haemolyticus (strain JCSC1435) protein is Acetyl-coenzyme A carboxylase carboxyl transferase subunit beta.